Reading from the N-terminus, the 183-residue chain is Gamma-crystallin N (183 aa).

Beta/gamma crystallin 'Greek key' domains are found at residues 6–46 (GKIT…RVES), 47–89 (GAWV…RPVG), 95–136 (FRID…KVYG), and 138–180 (GAWV…RRVL).

Belongs to the beta/gamma-crystallin family. Monomer. As to expression, detected in the auditory hindbrain where it is highly expressed in the medial nucleus of the trapezoid body, but also present in other nuclei of the superior olivary complex.

In terms of biological role, crystallins are the dominant structural components of the vertebrate eye lens. Also plays an important role for integrity and function of auditory nuclei. This is Gamma-crystallin N from Rattus norvegicus (Rat).